Reading from the N-terminus, the 186-residue chain is Mitoferrin-2A (186 aa).

The stretch at 75–163 (SNVTTHMLAG…FACYEKLKKT (89 aa)) is one Solcar repeat. 3 helical membrane-spanning segments follow: residues 77–96 (VTTHMLAGAVAGVMEHCLMY), 137–157 (RGLNVTATGAGPAHALYFACY), and 172–185 (GNSHIANGTDYSCP).

It belongs to the mitochondrial carrier (TC 2.A.29) family.

Its subcellular location is the mitochondrion inner membrane. It catalyses the reaction Fe(2+)(in) = Fe(2+)(out). In terms of biological role, mitochondrial iron transporter that mediates iron uptake. Probably required for heme synthesis of hemoproteins and Fe-S cluster assembly in non-erythroid cells. This chain is Mitoferrin-2A (slc25a28-a), found in Xenopus laevis (African clawed frog).